A 126-amino-acid polypeptide reads, in one-letter code: Small ribosomal subunit protein uS13 (126 aa).

A disordered region spans residues 95–126 (GLPVRGQQTRTNARTRKGKRKTVGGTKKAKAK). The span at 107–126 (ARTRKGKRKTVGGTKKAKAK) shows a compositional bias: basic residues.

This sequence belongs to the universal ribosomal protein uS13 family. Part of the 30S ribosomal subunit. Forms a loose heterodimer with protein S19. Forms two bridges to the 50S subunit in the 70S ribosome.

In terms of biological role, located at the top of the head of the 30S subunit, it contacts several helices of the 16S rRNA. In the 70S ribosome it contacts the 23S rRNA (bridge B1a) and protein L5 of the 50S subunit (bridge B1b), connecting the 2 subunits; these bridges are implicated in subunit movement. Contacts the tRNAs in the A and P-sites. This is Small ribosomal subunit protein uS13 from Aquifex aeolicus (strain VF5).